A 2141-amino-acid polypeptide reads, in one-letter code: Oxygen-regulated protein 1 (2141 aa).

A compositionally biased stretch (polar residues) spans Met1 to Ser10. A disordered region spans residues Met1 to Gly20. Residues Lys34–Asp116 form the Doublecortin 1 domain. Positions Leu126–Pro149 are disordered. The Doublecortin 2 domain maps to Arg156 to Asp235. 3 disordered regions span residues Arg259–Tyr278, Tyr1432–Arg1458, and Asp1589–Gly1612. Residues His268–Tyr278 show a composition bias toward polar residues. The segment covering Ser1435 to Glu1444 has biased composition (basic and acidic residues). Composition is skewed to polar residues over residues Ser1448–Arg1458 and Glu1598–Pro1610.

In terms of assembly, interacts (via the doublecortin domains) with microtubules. Interacts with RP1L1. Interacts with MAK.

It localises to the cytoplasm. The protein localises to the cytoskeleton. The protein resides in the cilium axoneme. Its subcellular location is the cell projection. It is found in the cilium. It localises to the photoreceptor outer segment. Its function is as follows. Microtubule-associated protein regulating the stability and length of the microtubule-based axoneme of photoreceptors. Required for the differentiation of photoreceptor cells, it plays a role in the organization of the outer segment of rod and cone photoreceptors ensuring the correct orientation and higher-order stacking of outer segment disks along the photoreceptor axoneme. The sequence is that of Oxygen-regulated protein 1 (RP1) from Canis lupus familiaris (Dog).